The chain runs to 766 residues: Nitrogen permease regulator 3 (766 aa).

An N-terminal signal peptide occupies residues 1–23; the sequence is MSSVVRPPDPCLVAIILITCSRA. 3 disordered regions span residues 33-140, 186-257, and 594-638; these read PNPS…WDSF, RKKR…VTDG, and EEAK…NATP. A compositionally biased stretch (polar residues) spans 36–49; that stretch reads SIASAPSRSNSRTK. A compositionally biased stretch (low complexity) spans 51–61; it reads SPRASDSSPSS. Acidic residues predominate over residues 62-74; the sequence is DNEEGSSSDEDDL. Positions 89–110 are enriched in polar residues; sequence RRLSSGSPSTKAASQQRKSNLG. Composition is skewed to basic and acidic residues over residues 118–133 and 217–250; these read ETPRDGRRSERSHELE and GGEKLESERDPNVDGRSDKDEEPSRSLIESHPDE.

This sequence belongs to the NPR3 family.

Its function is as follows. Mediates inactivation of the TORC1 complex in response to amino acid starvation. Required for meiotic nuclear division. This is Nitrogen permease regulator 3 (NPR3) from Coccidioides immitis (strain RS) (Valley fever fungus).